A 272-amino-acid chain; its full sequence is Outer surface protein A (272 aa).

The signal sequence occupies residues M1 to A16. Residue C17 is the site of N-palmitoyl cysteine attachment. Residue C17 is the site of S-diacylglycerol cysteine attachment.

This sequence belongs to the OspA lipoprotein family.

The protein resides in the cell outer membrane. The protein localises to the cell surface. This chain is Outer surface protein A, found in Borreliella burgdorferi (Lyme disease spirochete).